The chain runs to 432 residues: Tol-Pal system protein TolB (432 aa).

An N-terminal signal peptide occupies residues M1 to A22.

It belongs to the TolB family. The Tol-Pal system is composed of five core proteins: the inner membrane proteins TolA, TolQ and TolR, the periplasmic protein TolB and the outer membrane protein Pal. They form a network linking the inner and outer membranes and the peptidoglycan layer.

It is found in the periplasm. Part of the Tol-Pal system, which plays a role in outer membrane invagination during cell division and is important for maintaining outer membrane integrity. In Marinomonas sp. (strain MWYL1), this protein is Tol-Pal system protein TolB.